A 144-amino-acid polypeptide reads, in one-letter code: Eukaryotic translation initiation factor 1A, Y-chromosomal (144 aa).

Residues 1-15 (MPKNKGKGGKNRRRG) show a composition bias toward basic residues. Residues 1–26 (MPKNKGKGGKNRRRGKNENESEKREL) form a disordered region. The span at 16–26 (KNENESEKREL) shows a compositional bias: basic and acidic residues. Residues 22 to 96 (EKRELVFKED…NKADVILKYN (75 aa)) enclose the S1-like domain. A Glycyl lysine isopeptide (Lys-Gly) (interchain with G-Cter in ubiquitin) cross-link involves residue lysine 88. The interval 114-144 (KINETDTFGPGDDDEVQFDDIGDDDEDIDDI) is disordered. The segment covering 124-144 (GDDDEVQFDDIGDDDEDIDDI) has biased composition (acidic residues).

Belongs to the eIF-1A family. As to quaternary structure, component of the 43S pre-initiation complex (43S PIC), which is composed of the 40S ribosomal subunit, EIF1, eIF1A (EIF1AX), eIF3 complex, EIF5 and eIF2-GTP-initiator tRNA complex (eIF2 ternary complex). Interacts with EIF5; this interaction contributes to the maintenance of EIF1 within the open 43S PIC. Interacts through its C-terminal domain (CTD) with the CTD of EIF5B; from the location of the start codon by the 43S complex until the formation of the 80S complex. In terms of tissue distribution, ubiquitous.

It localises to the cytoplasm. Its function is as follows. Component of the 43S pre-initiation complex (43S PIC), which binds to the mRNA cap-proximal region, scans mRNA 5'-untranslated region, and locates the initiation codon. This protein enhances formation of the cap-proximal complex. Together with EIF1, facilitates scanning, start codon recognition, promotion of the assembly of 48S complex at the initiation codon (43S PIC becomes 48S PIC after the start codon is reached), and dissociation of aberrant complexes. After start codon location, together with EIF5B orients the initiator methionine-tRNA in a conformation that allows 60S ribosomal subunit joining to form the 80S initiation complex. Is released after 80S initiation complex formation, just after GTP hydrolysis by EIF5B, and before release of EIF5B. Its globular part is located in the A site of the 40S ribosomal subunit. Its interaction with EIF5 during scanning contribute to the maintenance of EIF1 within the open 43S PIC. In contrast to yeast orthologs, does not bind EIF1. The polypeptide is Eukaryotic translation initiation factor 1A, Y-chromosomal (EIF1AY) (Pan troglodytes (Chimpanzee)).